The sequence spans 126 residues: Holo-[acyl-carrier-protein] synthase (126 aa).

Mg(2+)-binding residues include D9 and E58.

It belongs to the P-Pant transferase superfamily. AcpS family. Mg(2+) serves as cofactor.

It localises to the cytoplasm. It catalyses the reaction apo-[ACP] + CoA = holo-[ACP] + adenosine 3',5'-bisphosphate + H(+). Functionally, transfers the 4'-phosphopantetheine moiety from coenzyme A to a Ser of acyl-carrier-protein. The polypeptide is Holo-[acyl-carrier-protein] synthase (Escherichia coli (strain ATCC 8739 / DSM 1576 / NBRC 3972 / NCIMB 8545 / WDCM 00012 / Crooks)).